Here is a 269-residue protein sequence, read N- to C-terminus: MVLIQFLTGFFYLYGKRLFSVSKVMDMICLDYYTILPAPLAMMLAARVKNYDLMKKLHEWEIPVDYALLVVDDVPTIDYCLSLGANSPTRAQKRRLLRDTTFNPVYKYLMNCSGFPTKREKNIPCDVQCERLQKTIIKELVFNCSVLLEMILLSEKEYAYALHYAAKYNQLPILMYCWQQSTNAESILLKTCCSDKNINCFNHCILYGGAQNLNAAMIEAAKHDARMLINYCVMLGGKSLNEARETAIIFGHIECAQHCSRLQSYVMRD.

It belongs to the asfivirus MGF 360 family.

Its function is as follows. Plays a role in virus cell tropism, and may be required for efficient virus replication in macrophages. This is Protein MGF 360-15R from African swine fever virus (isolate Pig/Kenya/KEN-50/1950) (ASFV).